Here is a 567-residue protein sequence, read N- to C-terminus: MSQEYDYIIVGAGSAGNTLATRLTEDEGVTVLLLEAGGPDYRLDFRTQMPAALAFPLQGRRYNWAYETDPEPHMDGRRMECGRGKGLGGSSLINGMCYIRGNAMDYDNWAKLPGLENWTYLDCLPYFRKAETRDIGPNDYHGGEGPVSVTTPKAGNNPLFHAMVEAGVQAGYPRTDDLNGYQQEGFGPMDRTVTKNGRRASTARGYLDTAKKRSTLTIVTHALTDKVLFEGKRAVGVRYLIGAAEERVEARARKEVLVCSGAIASPQLLQRSGVGPAKLLESLDIPVVHDLPGVGENLQDHLELYLQYACTQPVSLYPSLLWYNQPAIGAEWLFNGTGIGASNQFEAGGFIRSRPEFDWPNIQYHFLPVAINYNGSNGVKEHGFQAHMGSMRSPSRGRVQLKSKNPRDYPSILFNYMATEQDWQEFRDGIRLTREIMQQPALDPYRGREISPGIDVQTDEQLDKFIREHAETAFHPSCSCKMGTDEMAVVDGEGRVHGMQGLRVVDASIMPIITTGNLNAPTIMIAEKIADKIRGRQPLPRSTADYYVAGDAPVRGKPLREVGPTAQ.

6 to 35 (DYIIVGAGSAGNTLATRLTEDEGVTVLLLE) provides a ligand contact to FAD. H475 (proton acceptor) is an active-site residue.

The protein belongs to the GMC oxidoreductase family. The cofactor is FAD.

It catalyses the reaction choline + A = betaine aldehyde + AH2. The enzyme catalyses betaine aldehyde + NAD(+) + H2O = glycine betaine + NADH + 2 H(+). It functions in the pathway amine and polyamine biosynthesis; betaine biosynthesis via choline pathway; betaine aldehyde from choline (cytochrome c reductase route): step 1/1. Its function is as follows. Involved in the biosynthesis of the osmoprotectant glycine betaine. Catalyzes the oxidation of choline to betaine aldehyde and betaine aldehyde to glycine betaine at the same rate. The sequence is that of Oxygen-dependent choline dehydrogenase from Pseudomonas fluorescens (strain SBW25).